A 100-amino-acid polypeptide reads, in one-letter code: Protein RnfH (100 aa).

This sequence belongs to the UPF0125 (RnfH) family.

This is Protein RnfH from Actinobacillus succinogenes (strain ATCC 55618 / DSM 22257 / CCUG 43843 / 130Z).